The following is a 427-amino-acid chain: Beta-1,3-galactosyl-O-glycosyl-glycoprotein beta-1,6-N-acetylglucosaminyltransferase (427 aa).

Residues 1 to 9 (MLRKLWRRK) lie on the Cytoplasmic side of the membrane. Residues 5–9 (LWRRK) form a mediates interaction with GOLPH3 and is necessary and sufficient for localization to the Golgi region. Residues 10 to 32 (LFSFPTKYYFLFLAFSVVTFTVL) traverse the membrane as a helical; Signal-anchor for type II membrane protein segment. The interval 33-121 (RIHQKTEFVN…EPLSKEEAGF (89 aa)) is stem region. The Lumenal segment spans residues 33–427 (RIHQKTEFVN…RHKALETLKP (395 aa)). 2 N-linked (GlcNAc...) asparagine glycosylation sites follow: Asn-58 and Asn-95. 4 disulfide bridges follow: Cys-59–Cys-412, Cys-100–Cys-172, Cys-151–Cys-199, and Cys-372–Cys-380. The tract at residues 122–427 (PIAYSIVVHH…RHKALETLKP (306 aa)) is catalytic. Residues 128 to 130 (VVH), 155 to 157 (DAK), and Tyr-187 contribute to the UDP-N-acetyl-alpha-D-glucosamine site. Positions 243, 251, 254, 320, 341, and 358 each coordinate a glycoprotein. Glu-320 acts as the Nucleophile in catalysis. UDP-N-acetyl-alpha-D-glucosamine is bound by residues Arg-377 and Lys-400.

It belongs to the glycosyltransferase 14 family. Interacts with GOLPH3; may control GCNT1 retention in the Golgi. As to expression, expressed in tracheal submucosal glands and epithelium (at protein level).

It localises to the golgi apparatus membrane. The enzyme catalyses a 3-O-[beta-D-galactosyl-(1-&gt;3)-N-acetyl-alpha-D-galactosaminyl]-L-seryl-[protein] + UDP-N-acetyl-alpha-D-glucosamine = 3-O-{beta-D-galactosyl-(1-&gt;3)-[N-acetyl-beta-D-glucosaminyl-(1-&gt;6)]-N-acetyl-alpha-D-galactosaminyl}-L-seryl-[protein] + UDP + H(+). It carries out the reaction a 3-O-[beta-D-galactosyl-(1-&gt;3)-N-acetyl-alpha-D-galactosaminyl]-L-threonyl-[protein] + UDP-N-acetyl-alpha-D-glucosamine = a 3-O-{beta-D-galactosyl-(1-&gt;3)-[N-acetyl-beta-D-glucosaminyl-(1-&gt;6)]-N-acetyl-alpha-D-galactosaminyl}-L-threonyl-[protein] + UDP + H(+). It catalyses the reaction a globoside GalGb4Cer + UDP-N-acetyl-alpha-D-glucosamine = a globoside GlcNAc-(beta1-&gt;6)-GalGb4Cer + UDP + H(+). The catalysed reaction is a ganglioside GA1 + UDP-N-acetyl-alpha-D-glucosamine = a ganglioside beta-D-GlcNAc-(1-&gt;6)-GA1 + UDP + H(+). It functions in the pathway protein modification; protein glycosylation. It participates in glycolipid biosynthesis. Functionally, glycosyltransferase that catalyzes the transfer of an N-acetylglucosamine (GlcNAc) moiety in beta1-6 linkage from UDP-GlcNAc onto mucin-type core 1 O-glycan to form the branched mucin-type core 2 O-glycan. The catalysis is metal ion-independent and occurs with inversion of the anomeric configuration of sugar donor. Selectively involved in synthesis of mucin-type core 2 O-glycans that serve as scaffolds for the display of selectin ligand sialyl Lewis X epitope by myeloid cells, with an impact on homeostasis and recruitment to inflammatory sites. Can also act on glycolipid substrates. Transfers GlcNAc moiety to GalGb4Cer globosides in a reaction step to the synthesis of stage-specific embryonic antigen 1 (SSEA-1) determinant. Can use Galbeta1-3GalNAcalpha1- and Galbeta1-3GalNAcbeta1- oligosaccharide derivatives as acceptor substrates. This Bos taurus (Bovine) protein is Beta-1,3-galactosyl-O-glycosyl-glycoprotein beta-1,6-N-acetylglucosaminyltransferase (GCNT1).